The primary structure comprises 42 residues: uncharacterized protein (42 aa).

Residues 10 to 30 form a helical membrane-spanning segment; the sequence is VANWVTVILMALAGYAVLALA.

Its subcellular location is the host membrane. This is an uncharacterized protein from Acinetobacter calcoaceticus (Arthrobacter siderocapsulatus).